Reading from the N-terminus, the 541-residue chain is MSETINTAAQFPSFEKPTVQFNERGWGPCELPDTFKDVPYQPFSKNDRLGKICDWTSTSNNDKKYQNKYASSFGTGNQYSYYHEEDETTFHLVDTARVQKPPHQRGRFRNMRGRGGRGRNPRGGLNNHHHHGMTTLNGKNVKARDTRRGMGKKFGHRGPPPKMRESSVAVRADWASIEEMDFPRLIKLSLPNIKDGVDIATCGTLEYYDKTYDRINVKNEKPLQKIDRIVHTVTTTDDPVIRRLSKTVGNVFATDAILATIMCSTRSNYSWDIVIEKVGDKPPTDDDSSCNSPRNLAIEATFINHNFSQQVLKTGDQEAKFKFEEPNPFISEDEDIQVASVGYRYKKWELGSDIVLVARCEHDGVLQTPSGEPQFMSIKALNEWDSKLANGVEWRQKLDTQRGAVLANELRNNACKLAKWTVQAVLAGSDQLKLGYVSRINPRDHSRHVILGTQQFKPHEFATQINLSMDNAWGVLRCIIDLVMKQKDGKYLIMKDPNKPIIRLYDIPDNTFDSDDSDDGEGDDGEGFQQVYNYANNSNKI.

The interval 98-136 (VQKPPHQRGRFRNMRGRGGRGRNPRGGLNNHHHHGMTTL) is disordered. Residues 100-120 (KPPHQRGRFRNMRGRGGRGRN) are compositionally biased toward basic residues.

This sequence belongs to the eIF-3 subunit D family. In terms of assembly, component of the eukaryotic translation initiation factor 3 (eIF-3) complex. The eIF-3 complex interacts with pix.

Its subcellular location is the cytoplasm. MRNA cap-binding component of the eukaryotic translation initiation factor 3 (eIF-3) complex, which is involved in protein synthesis of a specialized repertoire of mRNAs and, together with other initiation factors, stimulates binding of mRNA and methionyl-tRNAi to the 40S ribosome. The eIF-3 complex specifically targets and initiates translation of a subset of mRNAs involved in cell proliferation. In the eIF-3 complex, eif3d specifically recognizes and binds the 7-methylguanosine cap of a subset of mRNAs. This chain is Eukaryotic translation initiation factor 3 subunit D-1, found in Drosophila persimilis (Fruit fly).